The following is a 215-amino-acid chain: Large ribosomal subunit protein uL3 (215 aa).

Residues 136–155 are disordered; sequence GVSISHRSHGSTGQRQDPGK. Residue Q151 is modified to N5-methylglutamine.

The protein belongs to the universal ribosomal protein uL3 family. As to quaternary structure, part of the 50S ribosomal subunit. Forms a cluster with proteins L14 and L19. In terms of processing, methylated by PrmB.

Its function is as follows. One of the primary rRNA binding proteins, it binds directly near the 3'-end of the 23S rRNA, where it nucleates assembly of the 50S subunit. This is Large ribosomal subunit protein uL3 from Rickettsia felis (strain ATCC VR-1525 / URRWXCal2) (Rickettsia azadi).